A 103-amino-acid polypeptide reads, in one-letter code: Large ribosomal subunit protein uL24 (103 aa).

It belongs to the universal ribosomal protein uL24 family. In terms of assembly, part of the 50S ribosomal subunit.

One of two assembly initiator proteins, it binds directly to the 5'-end of the 23S rRNA, where it nucleates assembly of the 50S subunit. In terms of biological role, one of the proteins that surrounds the polypeptide exit tunnel on the outside of the subunit. The sequence is that of Large ribosomal subunit protein uL24 from Halalkalibacterium halodurans (strain ATCC BAA-125 / DSM 18197 / FERM 7344 / JCM 9153 / C-125) (Bacillus halodurans).